A 234-amino-acid polypeptide reads, in one-letter code: MAKLSKRMKLVRDSVDASKEYEINEAVVLLQKLATAKFTESIDVSVNLGVDPRRSDQNVRGATVLPHGTGRTVRVAVFTQGANAEAAKAAGADIVGMDDLAAQVKAGELNFDVVIASPDAMRVVGQLGQILGPRGLMPNPKVGTVTPDVATAVKNAKAGQIRYRNDKNGIIHSTIGKVTFTPVQIRENLEALLAALIKGKPSGAKGQFLKRISLSTTMGAGLKVDTSSVKATVA.

This sequence belongs to the universal ribosomal protein uL1 family. As to quaternary structure, part of the 50S ribosomal subunit.

Its function is as follows. Binds directly to 23S rRNA. The L1 stalk is quite mobile in the ribosome, and is involved in E site tRNA release. In terms of biological role, protein L1 is also a translational repressor protein, it controls the translation of the L11 operon by binding to its mRNA. This Psychromonas ingrahamii (strain DSM 17664 / CCUG 51855 / 37) protein is Large ribosomal subunit protein uL1.